Reading from the N-terminus, the 482-residue chain is Glutamate--tRNA ligase (482 aa).

The 'HIGH' region signature appears at 9–19 (PSPTGPLHIGG). Positions 250-254 (KMSKR) match the 'KMSKS' region motif. Residue K253 coordinates ATP.

It belongs to the class-I aminoacyl-tRNA synthetase family. Glutamate--tRNA ligase type 1 subfamily. Monomer.

The protein resides in the cytoplasm. The enzyme catalyses tRNA(Glu) + L-glutamate + ATP = L-glutamyl-tRNA(Glu) + AMP + diphosphate. In terms of biological role, catalyzes the attachment of glutamate to tRNA(Glu) in a two-step reaction: glutamate is first activated by ATP to form Glu-AMP and then transferred to the acceptor end of tRNA(Glu). The protein is Glutamate--tRNA ligase of Desulforamulus reducens (strain ATCC BAA-1160 / DSM 100696 / MI-1) (Desulfotomaculum reducens).